The chain runs to 361 residues: MLLELAQWFAGDIRLLNVFSYITLRTVLAALTALIISFIVGPAMIRKLTAYKIGQAVRDDGPQTHLVKAGTPTMGGALILVSIAITTLLWADLSNRYVWIVLITTLGFGMIGWVDDYRKVVYRNPKGLSARAKLFWQSAIAILVALYLVLTAELPAQTTLIVPFFKQVAVPLGVTGFVALTYFVIVGTSNAVNLTDGLDGLAIMPTVMISSALAIFSYVAGHAVFAKYLGMPHIPQAGELAVFCGALAGAGLAFLWFNAYPAEVFMGDVGALALGAALGIVTVIVRQEIVMLIMGGVFVVETLSVMLQVASFKLIGKRIFRMAPLHHHYELKGWKENQVVVRFWIITMMLVLFGLSSLKLR.

Helical transmembrane passes span 25-45, 73-93, 97-117, 134-154, 168-188, 200-220, 237-257, 264-284, 289-309, and 338-358; these read RTVL…PAMI, TMGG…WADL, YVWI…VDDY, LFWQ…TAEL, VAVP…IVGT, GLAI…SYVA, AGEL…FLWF, VFMG…VTVI, IVML…MLQV, and QVVV…LSSL.

It belongs to the glycosyltransferase 4 family. MraY subfamily. Mg(2+) is required as a cofactor.

Its subcellular location is the cell inner membrane. The catalysed reaction is UDP-N-acetyl-alpha-D-muramoyl-L-alanyl-gamma-D-glutamyl-meso-2,6-diaminopimeloyl-D-alanyl-D-alanine + di-trans,octa-cis-undecaprenyl phosphate = di-trans,octa-cis-undecaprenyl diphospho-N-acetyl-alpha-D-muramoyl-L-alanyl-D-glutamyl-meso-2,6-diaminopimeloyl-D-alanyl-D-alanine + UMP. Its pathway is cell wall biogenesis; peptidoglycan biosynthesis. Catalyzes the initial step of the lipid cycle reactions in the biosynthesis of the cell wall peptidoglycan: transfers peptidoglycan precursor phospho-MurNAc-pentapeptide from UDP-MurNAc-pentapeptide onto the lipid carrier undecaprenyl phosphate, yielding undecaprenyl-pyrophosphoryl-MurNAc-pentapeptide, known as lipid I. The protein is Phospho-N-acetylmuramoyl-pentapeptide-transferase of Nitrosospira multiformis (strain ATCC 25196 / NCIMB 11849 / C 71).